A 333-amino-acid chain; its full sequence is Gramillins biosynthetic cluster protein FGSG_00039 (333 aa).

It participates in mycotoxin biosynthesis. Functionally, part of the gene cluster that mediates the biosynthesis of gramillins A and B, bicyclic lipopeptides that induce cell death in maize leaves but not in wheat leaves. The nonribosomal peptide synthetase GRA1 incorporates respectively a glutamic adic (Glu), a leucine (Leu), a serine (Ser), a hydroxyglutamine (HOGln), a 2-amino decanoic acid, and 2 cysteins (CysB and CysA). The biosynthesis of 2-amino decanoic acid incorporated in gramillins could be initiated by a fatty acid synthase composed of the alpha and beta subunits FGSG_00036 and FGSG_11656. The cytochrome P450 monooxygenase FGSG_15680 could hydroxylate the fatty acid chain. Subsequent oxidation to the ketone by the oxidoreductase FGSG_00048 and transamination by aminotransferase FGSG_00049 could form 2-amino-decanoic acid. On the other hand, FGSG_15680 could also be responsible for the HO-modified glutamine at the gamma-position. Whether hydroxylation occurs on the fully assembled product or on the Gln residue prior to assembly into the gramillins requires further proof. The thioredoxin FGSG_00043 could also be required for the disulfide-bond formation between CysA and CysB. The specific involvement of the remaining proteins from the cluster is more difficult to discern, but could have broader regulatory (FGSG_00040 and FGSG_11657) or enzymatic functions (FGSG_00044 and FGSG_00045). The final C-domain of GRA1 does not possess the expected sequence of a termination CT domain, often implicated in macrocyclization and release of a cyclopeptidein fungal NRPs; and the thioesterase FGSG_00047 may act in concert with the terminal C-domain of GRA1 to catalyze the formation of the macrocyclic anhydride and release of the products. The chain is Gramillins biosynthetic cluster protein FGSG_00039 from Gibberella zeae (strain ATCC MYA-4620 / CBS 123657 / FGSC 9075 / NRRL 31084 / PH-1) (Wheat head blight fungus).